The chain runs to 106 residues: uncharacterized protein (106 aa).

Residues 1–27 (MHHFVPSISLFMASVSFSVFFSHLATS) form the signal peptide. A helical membrane pass occupies residues 42 to 62 (TLFSMVPLINSSFNLSVFLFF).

The protein localises to the membrane. This is an uncharacterized protein from Saccharomyces cerevisiae (strain ATCC 204508 / S288c) (Baker's yeast).